Here is a 333-residue protein sequence, read N- to C-terminus: Homoserine O-succinyltransferase (333 aa).

Cys147 functions as the Acyl-thioester intermediate in the catalytic mechanism. Residues Lys168 and Ser196 each coordinate substrate. His239 functions as the Proton acceptor in the catalytic mechanism. Glu241 is an active-site residue. Position 253 (Arg253) interacts with substrate.

The protein belongs to the MetA family.

It localises to the cytoplasm. The enzyme catalyses L-homoserine + succinyl-CoA = O-succinyl-L-homoserine + CoA. It functions in the pathway amino-acid biosynthesis; L-methionine biosynthesis via de novo pathway; O-succinyl-L-homoserine from L-homoserine: step 1/1. Transfers a succinyl group from succinyl-CoA to L-homoserine, forming succinyl-L-homoserine. The chain is Homoserine O-succinyltransferase from Rhodopseudomonas palustris.